We begin with the raw amino-acid sequence, 386 residues long: Antilisterial bacteriocin subtilosin biosynthesis protein AlbE (386 aa).

In terms of biological role, involved in the production of the bacteriocin subtilosin. The protein is Antilisterial bacteriocin subtilosin biosynthesis protein AlbE (albE) of Bacillus subtilis (strain 168).